The primary structure comprises 319 residues: Acetyl-coenzyme A carboxylase carboxyl transferase subunit alpha (319 aa).

A CoA carboxyltransferase C-terminal domain is found at 34–295 (ELEEEVSKLK…KVRLKRDLAD (262 aa)).

This sequence belongs to the AccA family. As to quaternary structure, acetyl-CoA carboxylase is a heterohexamer composed of biotin carboxyl carrier protein (AccB), biotin carboxylase (AccC) and two subunits each of ACCase subunit alpha (AccA) and ACCase subunit beta (AccD).

The protein localises to the cytoplasm. It catalyses the reaction N(6)-carboxybiotinyl-L-lysyl-[protein] + acetyl-CoA = N(6)-biotinyl-L-lysyl-[protein] + malonyl-CoA. It participates in lipid metabolism; malonyl-CoA biosynthesis; malonyl-CoA from acetyl-CoA: step 1/1. In terms of biological role, component of the acetyl coenzyme A carboxylase (ACC) complex. First, biotin carboxylase catalyzes the carboxylation of biotin on its carrier protein (BCCP) and then the CO(2) group is transferred by the carboxyltransferase to acetyl-CoA to form malonyl-CoA. The polypeptide is Acetyl-coenzyme A carboxylase carboxyl transferase subunit alpha (Pseudoalteromonas translucida (strain TAC 125)).